Consider the following 109-residue polypeptide: Spermidine export protein MdtI (109 aa).

4 helical membrane passes run 6 to 26 (FYPI…NILL), 36 to 56 (WLGI…AQAV), 64 to 84 (AYAM…WILF), and 88 to 108 (LNYK…MIKL).

Belongs to the drug/metabolite transporter (DMT) superfamily. Small multidrug resistance (SMR) (TC 2.A.7.1) family. MdtI subfamily. Forms a complex with MdtJ.

It is found in the cell inner membrane. Its function is as follows. Catalyzes the excretion of spermidine. The sequence is that of Spermidine export protein MdtI from Yersinia pseudotuberculosis serotype I (strain IP32953).